The sequence spans 829 residues: Probable beta-glucosidase H (829 aa).

N-linked (GlcNAc...) asparagine glycosylation occurs at Asn13. Asp225 is an active-site residue. 5 N-linked (GlcNAc...) asparagine glycosylation sites follow: Asn304, Asn473, Asn602, Asn627, and Asn664. The region spanning 389–548 is the PA14 domain; the sequence is RMLSNAVIHF…DPEQMVANAV (160 aa).

The protein belongs to the glycosyl hydrolase 3 family.

It is found in the secreted. It catalyses the reaction Hydrolysis of terminal, non-reducing beta-D-glucosyl residues with release of beta-D-glucose.. It participates in glycan metabolism; cellulose degradation. In terms of biological role, beta-glucosidases are one of a number of cellulolytic enzymes involved in the degradation of cellulosic biomass. Catalyzes the last step releasing glucose from the inhibitory cellobiose. In Neosartorya fischeri (strain ATCC 1020 / DSM 3700 / CBS 544.65 / FGSC A1164 / JCM 1740 / NRRL 181 / WB 181) (Aspergillus fischerianus), this protein is Probable beta-glucosidase H (bglH).